The chain runs to 313 residues: MNKLVFCLMGPTASGKTGLACELLTHFPFEIISVDSAMIYRDMNIGTAKPSIHELQRAPHYLIDIKDPVESYSAAQFCTDALSLCAEIIKRGNIPLLVGGTMMYFNALQKGLATLPEADEAVRKRLEEEALSQGWDFLYQKLSQLDPVTAARIHAHDTQRIQRALEVYYLTGSTLSTYLTGPHEQPDYYFVNLALFPEQRSWLHERIAQRFDAMLSEGFIEEVQQLQAKWPIQINLPAMRCVGYRQILEYLAGHYDYETMREKGIAATRQLAKRQLTWLRHWEGALFYDSQNVGFNTDIIAKIREILDNTVSN.

Residue 10–17 (GPTASGKT) participates in ATP binding. Residue 12-17 (TASGKT) participates in substrate binding. Interaction with substrate tRNA regions lie at residues 35–38 (DSAM), 159–163 (QRIQR), and 240–245 (RCVGYR).

It belongs to the IPP transferase family. As to quaternary structure, monomer. It depends on Mg(2+) as a cofactor.

It carries out the reaction adenosine(37) in tRNA + dimethylallyl diphosphate = N(6)-dimethylallyladenosine(37) in tRNA + diphosphate. Catalyzes the transfer of a dimethylallyl group onto the adenine at position 37 in tRNAs that read codons beginning with uridine, leading to the formation of N6-(dimethylallyl)adenosine (i(6)A). This Legionella pneumophila (strain Corby) protein is tRNA dimethylallyltransferase.